Consider the following 757-residue polypeptide: Cap-specific mRNA (nucleoside-2'-O-)-methyltransferase 1 (757 aa).

The disordered stretch occupies residues 1–61; it reads MFQSNQYDEY…EDDEEEEDTP (61 aa). Acidic residues-rich tracts occupy residues 18–32 and 40–59; these read EENE…NENE and GDQD…EEED. The G-patch domain maps to 62–108; the sequence is KLSFGAKFLAKHGHIEGQGLGKEKDGRIDLIEVDRFQSTKGLGFAEN. In terms of domain architecture, RrmJ-type SAM-dependent 2'-O-MTase spans 214 to 438; that stretch reads IFINRAAVKM…ERYIICKNFL (225 aa). The S-adenosyl-L-methionine site is built by Gly-257, Glu-301, and Asp-352. Lys-392 acts as the Proton acceptor in catalysis. Residues 538 to 548 are compositionally biased toward basic residues; the sequence is HKNRQKHHHNN. Residues 538-670 are disordered; that stretch reads HKNRQKHHHN…NNNNNNNNKN (133 aa). The span at 549–569 shows a compositional bias: low complexity; it reads HSNNNNNNNNSNNNNNNNNQH. Residues 570–581 show a composition bias toward basic residues; it reads QHQHHQHQHHQN. The span at 597–668 shows a compositional bias: low complexity; sequence NNNINNNSNN…NNNNNNNNNN (72 aa).

It catalyses the reaction a 5'-end (N(7)-methyl 5'-triphosphoguanosine)-ribonucleoside in mRNA + S-adenosyl-L-methionine = a 5'-end (N(7)-methyl 5'-triphosphoguanosine)-(2'-O-methyl-ribonucleoside) in mRNA + S-adenosyl-L-homocysteine + H(+). In terms of biological role, S-adenosyl-L-methionine-dependent methyltransferase that mediates mRNA cap1 2'-O-ribose methylation to the 5'-cap structure of mRNAs. Methylates the ribose of the first nucleotide of a m(7)GpppG-capped mRNA to produce m(7)GpppNmp (cap1). Cap1 modification is linked to higher levels of translation. The protein is Cap-specific mRNA (nucleoside-2'-O-)-methyltransferase 1 of Dictyostelium discoideum (Social amoeba).